The sequence spans 117 residues: Large ribosomal subunit protein bL19 (117 aa).

Belongs to the bacterial ribosomal protein bL19 family.

Its function is as follows. This protein is located at the 30S-50S ribosomal subunit interface and may play a role in the structure and function of the aminoacyl-tRNA binding site. The sequence is that of Large ribosomal subunit protein bL19 from Shewanella pealeana (strain ATCC 700345 / ANG-SQ1).